A 564-amino-acid chain; its full sequence is Myb-like protein F (564 aa).

Disordered regions lie at residues 22-107, 122-203, and 310-410; these read YNNS…NYNN, NYNN…YNGG, and NYNN…TKKY. The segment covering 23–79 has biased composition (low complexity); sequence NNSNHYNDNNDNNNNNNNNNNDNNNNDNNNNNNNNNNSIINNESDNESNGTSNNYND. Over residues 82-96 the composition is skewed to basic and acidic residues; the sequence is NDNHHHHQDDEHHGN. Composition is skewed to low complexity over residues 97–107, 135–173, 193–203, and 310–364; these read GNDNDNENYNN, EINS…NNSK, NNNNNNKYNGG, and NYNN…NSSN. A compositionally biased stretch (basic and acidic residues) spans 365–409; sequence KEYKEKEYKEKEYKEKEFKESKDSSLKRKSSSDDDGDDSGRDTKK. The region spanning 412-464 is the SANT domain; it reads PGRTVWTLEEEELYKEVFNHYGKNWKKIKTHFPDKSKSQVTSHGQYLIKINKL. The span at 519–556 shows a compositional bias: low complexity; the sequence is NNENTNDNNNHNNNNYNDNNNNSNNNNNFNNSNNNNTN. The segment at 519-564 is disordered; that stretch reads NNENTNDNNNHNNNNYNDNNNNSNNNNNFNNSNNNNTNKFIDEDDD.

It localises to the nucleus. This Dictyostelium discoideum (Social amoeba) protein is Myb-like protein F (mybF).